The primary structure comprises 193 residues: Ion-translocating oxidoreductase complex subunit A (193 aa).

6 consecutive transmembrane segments (helical) span residues I5–L25, I39–V59, L72–I92, L102–L122, V134–L154, and S171–V191.

It belongs to the NqrDE/RnfAE family. In terms of assembly, the complex is composed of six subunits: RnfA, RnfB, RnfC, RnfD, RnfE and RnfG.

Its subcellular location is the cell inner membrane. Functionally, part of a membrane-bound complex that couples electron transfer with translocation of ions across the membrane. This is Ion-translocating oxidoreductase complex subunit A from Histophilus somni (strain 129Pt) (Haemophilus somnus).